Here is a 612-residue protein sequence, read N- to C-terminus: UvrABC system protein C (612 aa).

One can recognise a GIY-YIG domain in the interval 20 to 98 (THSGVYRMLD…IKQHRPKYNI (79 aa)). The 36-residue stretch at 208-243 (SSVLEEISANMYQASEDMEYEKAQVYRDQLVVLRKL) folds into the UVR domain.

It belongs to the UvrC family. Interacts with UvrB in an incision complex.

The protein resides in the cytoplasm. Its function is as follows. The UvrABC repair system catalyzes the recognition and processing of DNA lesions. UvrC both incises the 5' and 3' sides of the lesion. The N-terminal half is responsible for the 3' incision and the C-terminal half is responsible for the 5' incision. This is UvrABC system protein C from Francisella tularensis subsp. holarctica (strain LVS).